The sequence spans 425 residues: Ribosome biogenesis protein WDR12 homolog (425 aa).

The segment at 13-94 (LQLHLITKQK…EDTVELEYVE (82 aa)) is ubiquitin-like (UBL) domain. WD repeat units follow at residues 106-143 (LHDDWVSAVEARDNWILTGCYDNTLNLWTTKGKHKLTI), 145-187 (GHIA…NSVE), 194-233 (GHERGVDCIAANGSKTKMATGSWDTMLKIWSTDVRSGGGD), 258-296 (GHRECISGVQWIDDNTLVTSSWDHTIKIWDLALNGIKSE), 298-337 (SGNKSFFDLSYSKLNGLIITASPDKNLRLYDPKSNQGTLV), 343-383 (GHTQ…APIF), and 387-425 (GHEDKVLACDWSNPRFILSGGSDNSVRVFKSKIAIGGEK). Positions 227–247 (VRSGGGDSEPSTSKRQKLDQG) are disordered.

Belongs to the WD repeat WDR12/YTM1 family.

The protein resides in the nucleus. It is found in the nucleolus. Its subcellular location is the nucleoplasm. In terms of biological role, required for maturation of ribosomal RNAs and formation of the large ribosomal subunit. This chain is Ribosome biogenesis protein WDR12 homolog, found in Culex quinquefasciatus (Southern house mosquito).